The following is a 234-amino-acid chain: HTH-type transcriptional regulator ArcR (234 aa).

Residue Val40–Asp129 coordinates a nucleoside 3',5'-cyclic phosphate. The 74-residue stretch at Lys155–Leu228 folds into the HTH crp-type domain. A DNA-binding region (H-T-H motif) is located at residues Ile188–His207.

The protein localises to the cytoplasm. Its function is as follows. Positively regulates the expression of the arcABDCR operon under anaerobic conditions, thus playing an essential role in arginine catabolism. May also control the expression of genes encoding proteins which are involved in anaerobic metabolism. Can bind cyclic AMP. The chain is HTH-type transcriptional regulator ArcR (arcR) from Staphylococcus aureus (strain Mu50 / ATCC 700699).